The chain runs to 136 residues: Small ribosomal subunit protein uS8 (136 aa).

The protein belongs to the universal ribosomal protein uS8 family. Part of the 30S ribosomal subunit. Contacts proteins S5 and S12.

One of the primary rRNA binding proteins, it binds directly to 16S rRNA central domain where it helps coordinate assembly of the platform of the 30S subunit. This is Small ribosomal subunit protein uS8 from Frankia alni (strain DSM 45986 / CECT 9034 / ACN14a).